The following is a 299-amino-acid chain: MTGDRPWHGQCSLQLISKTAADDLQSQLTVHQSQCTAPFKIQRANLDDDGRCQLPLLHTAGGLVGGDQLSVNVKAGASSRGLVTSVAAQKVYGSVGRSKQHPKGLWASQECHFELATNADLEWLPQELVVFQGGLYKQRMQVELQPKASFLSAEVVRLGRTAAGETLNEGAWRSSLEICRQTPIGRQWELVDQLELNSDVLQNLHGMGRQPVFGSFVWAAPDPLTAEVMETLLRNCRTDRANLEGSMACGGLDQGLVARYIGPSSQAARQWFTRIWARTRQLRRLSTPQPPREWPLQEE.

It belongs to the UreD family. In terms of assembly, ureD, UreF and UreG form a complex that acts as a GTP-hydrolysis-dependent molecular chaperone, activating the urease apoprotein by helping to assemble the nickel containing metallocenter of UreC. The UreE protein probably delivers the nickel.

The protein localises to the cytoplasm. Its function is as follows. Required for maturation of urease via the functional incorporation of the urease nickel metallocenter. This chain is Urease accessory protein UreD, found in Prochlorococcus marinus (strain MIT 9303).